Consider the following 71-residue polypeptide: Protein CYSTEINE-RICH TRANSMEMBRANE MODULE 8 (71 aa).

The segment covering 1-22 has biased composition (polar residues); sequence MNQSAQNYFSVQKPSETSSGPY. A disordered region spans residues 1–35; that stretch reads MNQSAQNYFSVQKPSETSSGPYTSPPPIGYPTRDA. Residues 48–64 traverse the membrane as a helical segment; sequence NSKGVNPEGCCAAICCC.

It belongs to the CYSTM1 family. In terms of tissue distribution, mostly expressed in stems, siliques, roots and flowers and, to a lower extent, in leaves.

The protein resides in the membrane. It localises to the nucleus. Its function is as follows. Involved in resistance to abiotic stress. This Arabidopsis thaliana (Mouse-ear cress) protein is Protein CYSTEINE-RICH TRANSMEMBRANE MODULE 8.